The chain runs to 289 residues: Pre-mRNA-splicing factor cwf23 (289 aa).

In terms of domain architecture, J spans 9–74; sequence DYYELLGINE…QLRKAYDSER (66 aa). Basic and acidic residues predominate over residues 129-148; sequence ESANLRRQRENRLREEQEQS. 2 disordered regions span residues 129–161 and 269–289; these read ESAN…SKIS and KQKH…TMNA.

The protein belongs to the DnaJ family. As to quaternary structure, belongs to the 40S cdc5-associated complex (or cwf complex), a spliceosome sub-complex reminiscent of a late-stage spliceosome composed of the U2, U5 and U6 snRNAs and at least brr2, cdc5, cwf2/prp3, cwf3/syf1, cwf4/syf3, cwf5/ecm2, spp42/cwf6, cwf7/spf27, cwf8, cwf9, cwf10, cwf11, cwf12, prp45/cwf13, cwf14, cwf15, cwf16, cwf17, cwf18, cwf19, cwf20, cwf21, cwf22, cwf23, cwf24, cwf25, cwf26, cyp7/cwf27, cwf28, cwf29/ist3, lea1, msl1, prp5/cwf1, prp10, prp12/sap130, prp17, prp22, sap61, sap62, sap114, sap145, slu7, smb1, smd1, smd3, smf1, smg1 and syf2.

It is found in the cytoplasm. Its subcellular location is the nucleus. Involved in pre-mRNA splicing. May be involved in endoplasmic reticulum-associated protein degradation (ERAD) and required for growth at low and high temperatures. The polypeptide is Pre-mRNA-splicing factor cwf23 (cwf23) (Schizosaccharomyces pombe (strain 972 / ATCC 24843) (Fission yeast)).